The primary structure comprises 66 residues: UPF0150 protein AF_0072.1 (66 aa).

It belongs to the UPF0150 family.

The protein is UPF0150 protein AF_0072.1 of Archaeoglobus fulgidus (strain ATCC 49558 / DSM 4304 / JCM 9628 / NBRC 100126 / VC-16).